A 468-amino-acid chain; its full sequence is MSSGKVVQVIGPVVDVQFPLSESLPDIDDALKVKREDGTELVIEVALELGDGIMRTVAMDSTDGLKRGAEVEGTGASISVPVGKDTLGRVFNVLGNTIDNGPEFDEDHPRNPIHRDAPKYDQLSTGIEILETGIKVIDLLAPYIKGGKIGLFGGAGVGKTVLIQELIHNIAQEHNGISVFTGVGERTREGNDLYFEMKESGVLEKTAMVFGQMNEPPGARMRVALTGLTLAEYFRDVEGQDVLLFIDNIFRFTQAGSEVSALLGRIPSAVGYQPTLATEMGQLQERITSTKKGSVTSIQAVYVPADDYTDPAPATTFAHLDATTNLERSLTQQGIYPAVDPLASTSSALTPEIVGEEHYEVATEVQHVLQRYRELQDIISILGMDELSDEEKIIVARARRIQFFLSQNFHVAEQFTGNPGSYVPVEETVKGFKEILEGKYDNLPEEAFRLVGGIEDVVEKAKKLAGNN.

Position 153-160 (153-160 (GGAGVGKT)) interacts with ATP.

Belongs to the ATPase alpha/beta chains family. As to quaternary structure, F-type ATPases have 2 components, CF(1) - the catalytic core - and CF(0) - the membrane proton channel. CF(1) has five subunits: alpha(3), beta(3), gamma(1), delta(1), epsilon(1). CF(0) has three main subunits: a(1), b(2) and c(9-12). The alpha and beta chains form an alternating ring which encloses part of the gamma chain. CF(1) is attached to CF(0) by a central stalk formed by the gamma and epsilon chains, while a peripheral stalk is formed by the delta and b chains.

The protein resides in the cell membrane. It catalyses the reaction ATP + H2O + 4 H(+)(in) = ADP + phosphate + 5 H(+)(out). Produces ATP from ADP in the presence of a proton gradient across the membrane. The catalytic sites are hosted primarily by the beta subunits. This chain is ATP synthase subunit beta, found in Ligilactobacillus salivarius (strain UCC118) (Lactobacillus salivarius).